We begin with the raw amino-acid sequence, 98 residues long: Cytochrome c2 (98 aa).

Pyrrolidone carboxylic acid is present on Gln1. Residues Cys10, Cys13, His14, and Met76 each coordinate heme c.

This sequence belongs to the cytochrome c family. Binds 1 heme c group covalently per subunit.

Its subcellular location is the periplasm. Cytochrome c2 is found mainly in purple, non-sulfur, photosynthetic bacteria where it functions as the electron donor to the oxidized bacteriochlorophyll in the photophosphorylation pathway. However, it may also have a role in the respiratory chain and is found in some non-photosynthetic bacteria. The sequence is that of Cytochrome c2 from Rhodoplanes tepidamans (Rhodoplanes cryptolactis).